A 252-amino-acid chain; its full sequence is uncharacterized protein (252 aa).

Positions 106–140 form a coiled coil; sequence IQSLHARRDHLDNAVEQLKSQLSRLDSSVAILKSQ.

This is an uncharacterized protein from Caenorhabditis elegans.